Consider the following 328-residue polypeptide: Beta-agarase C (328 aa).

The first 17 residues, 1–17, serve as a signal peptide directing secretion; sequence MNLTKMAVFAASLFCLA. A propeptide spanning residues 18–67 is cleaved from the precursor; that stretch reads CKNDIDTELEKKSIPESEIQKSEEKLPNEEELTPTDPDEETNKEETVTAN. A compositionally biased stretch (basic and acidic residues) spans 26–45; sequence LEKKSIPESEIQKSEEKLPN. Residues 26–61 form a disordered region; sequence LEKKSIPESEIQKSEEKLPNEEELTPTDPDEETNKE. Over residues 46–59 the composition is skewed to acidic residues; it reads EEELTPTDPDEETN. One can recognise a GH16 domain in the interval 70-328; that stretch reads YDFTGNTPPP…WIHTYQLVEE (259 aa). Substrate is bound by residues Trp110, 119-129, 133-135, Glu188, Glu193, and Arg224; these read KAENSGVSDGK and KAT. Glu188 acts as the Nucleophile in catalysis. Catalysis depends on Glu193, which acts as the Proton donor.

The protein belongs to the glycosyl hydrolase 16 family.

Its subcellular location is the secreted. It carries out the reaction Hydrolysis of (1-&gt;4)-beta-D-galactosidic linkages in agarose, giving the tetramer as the predominant product.. Cleaves the beta-1,4-linkages between beta-D-galactose and alpha-L-3,6-anhydro-galactose residues in agarose. Cleaves agarose in a random manner with retention of the anomeric-bond configuration, producing beta-anomers that give rise progressively to alpha-anomers when mutarotation takes place. This Zobellia galactanivorans (strain DSM 12802 / CCUG 47099 / CIP 106680 / NCIMB 13871 / Dsij) protein is Beta-agarase C (agaC).